Here is a 67-residue protein sequence, read N- to C-terminus: MPKLKNHSGAKKRFAKTATGKYKRRKAGRKHLLTPQSGSRKREMRQTGIIKPESAEGKLLKKYLPMD.

The span at 1 to 32 (MPKLKNHSGAKKRFAKTATGKYKRRKAGRKHL) shows a compositional bias: basic residues. A disordered region spans residues 1 to 54 (MPKLKNHSGAKKRFAKTATGKYKRRKAGRKHLLTPQSGSRKREMRQTGIIKPES).

The protein belongs to the bacterial ribosomal protein bL35 family.

This Elusimicrobium minutum (strain Pei191) protein is Large ribosomal subunit protein bL35.